Here is a 173-residue protein sequence, read N- to C-terminus: Photosystem I assembly protein Ycf3 (173 aa).

TPR repeat units lie at residues Ala-35–Gln-68, Gly-72–Gln-105, and Gly-120–Gly-153.

Belongs to the Ycf3 family.

The protein localises to the cellular thylakoid membrane. In terms of biological role, essential for the assembly of the photosystem I (PSI) complex. May act as a chaperone-like factor to guide the assembly of the PSI subunits. This chain is Photosystem I assembly protein Ycf3, found in Prochlorococcus marinus (strain NATL2A).